Consider the following 362-residue polypeptide: Aminomethyltransferase (362 aa).

Belongs to the GcvT family. The glycine cleavage system is composed of four proteins: P, T, L and H.

It carries out the reaction N(6)-[(R)-S(8)-aminomethyldihydrolipoyl]-L-lysyl-[protein] + (6S)-5,6,7,8-tetrahydrofolate = N(6)-[(R)-dihydrolipoyl]-L-lysyl-[protein] + (6R)-5,10-methylene-5,6,7,8-tetrahydrofolate + NH4(+). Its function is as follows. The glycine cleavage system catalyzes the degradation of glycine. This chain is Aminomethyltransferase, found in Chloroherpeton thalassium (strain ATCC 35110 / GB-78).